The chain runs to 221 residues: Ras-related protein Rab-27A (221 aa).

The residue at position 2 (Ser-2) is an N-acetylserine. The residue at position 2 (Ser-2) is a Phosphoserine. A GTP-binding site is contributed by 16–24 (GDSGVGKTS). Residues 38–46 (FITTVGIDF) carry the Effector region motif. GTP contacts are provided by residues 74-78 (DTAGQ), 133-136 (NKSD), and 163-165 (SAA). A disulfide bridge links Cys-123 with Cys-188. Residues Cys-219 and Cys-221 are each lipidated (S-geranylgeranyl cysteine). A Cysteine methyl ester modification is found at Cys-221.

The protein belongs to the small GTPase superfamily. Rab family. As to quaternary structure, binds SYTL1, SLAC2B, MYRIP, SYTL3, SYTL4 and SYTL5. Interacts with RPH3A and RPH3A. Binds MLPH and SYTL2. Interacts with UNC13D. Does not interact with the BLOC-3 complex (heterodimer of HPS1 and HPS4). Interacts (GDP-bound form preferentially) with DENND10.

The protein resides in the membrane. Its subcellular location is the melanosome. It localises to the late endosome. The protein localises to the lysosome. It carries out the reaction GTP + H2O = GDP + phosphate + H(+). With respect to regulation, regulated by guanine nucleotide exchange factors (GEFs) which promote the exchange of bound GDP for free GTP, GTPase activating proteins (GAPs) which increase the GTP hydrolysis activity, and GDP dissociation inhibitors which inhibit the dissociation of the nucleotide from the GTPase. Activated by GEFs such as DENND10. In terms of biological role, small GTPase which cycles between active GTP-bound and inactive GDP-bound states. In its active state, binds to a variety of effector proteins to regulate homeostasis of late endocytic pathway, including endosomal positioning, maturation and secretion. Plays a role in cytotoxic granule exocytosis in lymphocytes. Required for both granule maturation and granule docking and priming at the immunologic synapse. The protein is Ras-related protein Rab-27A (RAB27A) of Canis lupus familiaris (Dog).